Here is a 612-residue protein sequence, read N- to C-terminus: Probable translation initiation factor IF-2 (612 aa).

Positions 11–229 (LRQPIVVVLG…VLAGLTQRYL (219 aa)) constitute a tr-type G domain. A G1 region spans residues 20–27 (GHVDHGKT). Residue 20-27 (GHVDHGKT) coordinates GTP. The interval 45–49 (LITQH) is G2. The G3 stretch occupies residues 84–87 (DTPG). GTP contacts are provided by residues 84–88 (DTPGH) and 138–141 (NKID). The segment at 138 to 141 (NKID) is G4. A G5 region spans residues 207-209 (SAK).

Belongs to the TRAFAC class translation factor GTPase superfamily. Classic translation factor GTPase family. IF-2 subfamily.

Function in general translation initiation by promoting the binding of the formylmethionine-tRNA to ribosomes. Seems to function along with eIF-2. The sequence is that of Probable translation initiation factor IF-2 from Hyperthermus butylicus (strain DSM 5456 / JCM 9403 / PLM1-5).